A 1461-amino-acid polypeptide reads, in one-letter code: Calmodulin-regulated spectrin-associated protein 2 (1461 aa).

Residues 211 to 324 (PGGQKARYRK…FMAELFWWFE (114 aa)) enclose the Calponin-homology (CH) domain. Residues 361-389 (RDSSSSSDFSSRYTRPQTHSSASGGIRRS) form a disordered region. Low complexity-rich tracts occupy residues 362 to 371 (DSSSSSDFSS) and 380 to 389 (SSASGGIRRS). Residues Ser391 and Ser393 each carry the phosphoserine modification. The residue at position 401 (Thr401) is a Phosphothreonine. A phosphoserine mark is found at Ser439, Ser572, Ser573, Ser585, and Ser647. Disordered regions lie at residues 573 to 613 (SPDN…EDSS) and 639 to 704 (ASNP…GSEL). A Phosphothreonine modification is found at Thr652. At Ser654 the chain carries Phosphoserine. Positions 654 to 673 (STKSQPGSSASSSSGVKMTS) are enriched in low complexity. Residues 677 to 687 (QKFRKLNHTDG) show a composition bias toward basic and acidic residues. Positions 730 to 767 (LLASEMVHLRMRLEEKRRAIEAQKKKMEAAFTKQRQKM) form a coiled coil. Basic and acidic residues predominate over residues 787-826 (REEAAGAEDEKVYTDRAKERESQKMDGQRSKSLADIKESM). The interval 787–855 (REEAAGAEDE…QWNLTSPSEE (69 aa)) is disordered. The residue at position 836 (Ser836) is a Phosphoserine. Positions 861 to 900 (EILEYTKSIEKLNSSLHFLQQEMQRLSLQQEMLMQMREQQ) form a coiled coil. An MBD region region spans residues 896–1007 (MREQQAWVIS…IQTRSFVCFG (112 aa)). A phosphoserine mark is found at Ser905 and Ser910. Disordered regions lie at residues 921-992 (RQAG…RRFS), 1004-1044 (VCFG…GEKE), 1069-1090 (NEDQ…PTAP), 1102-1124 (DLKP…DKEQ), and 1163-1321 (KETQ…EYTG). Positions 926–937 (SSAAAPFSSDSP) are enriched in low complexity. Polar residues predominate over residues 943-962 (SPQSSTRKSASFSVKNQRTP). Thr970, Thr975, and Thr977 each carry phosphothreonine. Phosphoserine is present on residues Ser981 and Ser992. A compositionally biased stretch (basic and acidic residues) spans 1011-1028 (EPQKEPKQKEEIKKEPSE). The segment covering 1077–1089 (TEPPPKPVFPPTA) has biased composition (pro residues). Basic and acidic residues-rich tracts occupy residues 1104 to 1124 (KPPE…DKEQ) and 1163 to 1224 (KETQ…DTVI). A Phosphoserine modification is found at Ser1120. Positions 1138–1210 (KDDQKAENDM…REFIRQEYMR (73 aa)) form a coiled coil. The segment covering 1259–1271 (SSLSLASLNTGDS) has biased composition (polar residues). Ser1285, Ser1291, and Ser1293 each carry phosphoserine. Over residues 1306 to 1318 (NASTTSSVASGTE) the composition is skewed to polar residues. One can recognise a CKK domain in the interval 1321 to 1455 (GPKLYKEPSA…QTKRPVTPKK (135 aa)).

It belongs to the CAMSAP1 family. As to quaternary structure, interacts with CAMSAP3. Interacts with KATNA1 and KATNB1; leading to regulate the length of CAMSAP2-decorated microtubule stretches. Interacts with a complex formed by AKAP9 and PDE4DIP isoform 2/MMG8/SMYLE, which recruits CAMSAP2 to the Golgi. Interacts with MAPRE1/EB1.

The protein localises to the cytoplasm. Its subcellular location is the cytoskeleton. The protein resides in the golgi apparatus. It is found in the cilium basal body. Functionally, key microtubule-organizing protein that specifically binds the minus-end of non-centrosomal microtubules and regulates their dynamics and organization. Specifically recognizes growing microtubule minus-ends and autonomously decorates and stabilizes microtubule lattice formed by microtubule minus-end polymerization. Acts on free microtubule minus-ends that are not capped by microtubule-nucleating proteins or other factors and protects microtubule minus-ends from depolymerization. In addition, it also reduces the velocity of microtubule polymerization. Through the microtubule cytoskeleton, also regulates the organization of cellular organelles including the Golgi and the early endosomes. Essential for the tethering, but not for nucleation of non-centrosomal microtubules at the Golgi: together with Golgi-associated proteins AKAP9 and PDE4DIP, required to tether non-centrosomal minus-end microtubules to the Golgi, an important step for polarized cell movement. Also acts as a regulator of neuronal polarity and development: localizes to non-centrosomal microtubule minus-ends in neurons and stabilizes non-centrosomal microtubules, which is required for neuronal polarity, axon specification and dendritic branch formation. Through the microtubule cytoskeleton, regulates the autophagosome transport. This is Calmodulin-regulated spectrin-associated protein 2 from Mus musculus (Mouse).